Here is a 327-residue protein sequence, read N- to C-terminus: Methionyl-tRNA formyltransferase (327 aa).

Position 121–124 (serine 121–proline 124) interacts with (6S)-5,6,7,8-tetrahydrofolate.

This sequence belongs to the Fmt family.

The enzyme catalyses L-methionyl-tRNA(fMet) + (6R)-10-formyltetrahydrofolate = N-formyl-L-methionyl-tRNA(fMet) + (6S)-5,6,7,8-tetrahydrofolate + H(+). Functionally, attaches a formyl group to the free amino group of methionyl-tRNA(fMet). The formyl group appears to play a dual role in the initiator identity of N-formylmethionyl-tRNA by promoting its recognition by IF2 and preventing the misappropriation of this tRNA by the elongation apparatus. This chain is Methionyl-tRNA formyltransferase, found in Burkholderia pseudomallei (strain 668).